The primary structure comprises 435 residues: ATP-dependent protease ATPase subunit HslU (435 aa).

ATP is bound by residues V18, 60–65 (GVGKTE), D248, E313, and R385.

This sequence belongs to the ClpX chaperone family. HslU subfamily. As to quaternary structure, a double ring-shaped homohexamer of HslV is capped on each side by a ring-shaped HslU homohexamer. The assembly of the HslU/HslV complex is dependent on binding of ATP.

The protein resides in the cytoplasm. Functionally, ATPase subunit of a proteasome-like degradation complex; this subunit has chaperone activity. The binding of ATP and its subsequent hydrolysis by HslU are essential for unfolding of protein substrates subsequently hydrolyzed by HslV. HslU recognizes the N-terminal part of its protein substrates and unfolds these before they are guided to HslV for hydrolysis. This Rhodospirillum rubrum (strain ATCC 11170 / ATH 1.1.1 / DSM 467 / LMG 4362 / NCIMB 8255 / S1) protein is ATP-dependent protease ATPase subunit HslU.